Reading from the N-terminus, the 524-residue chain is Strychnine-10-hydroxylase (524 aa).

The chain crosses the membrane as a helical span at residues 6–26 (LYIHTAILGLISLFLILHFVF). Cysteine 466 is a heme binding site.

This sequence belongs to the cytochrome P450 family. Heme serves as cofactor.

It is found in the membrane. It carries out the reaction strychnine + reduced [NADPH--hemoprotein reductase] + O2 = 10-hydroxystrychnine + oxidized [NADPH--hemoprotein reductase] + H2O + H(+). It participates in alkaloid biosynthesis. In terms of biological role, monooxygenase involved in the biosynthesis of curare monoterpene indole alkaloids (MIAs), natural products such as strychnine, a neurotoxic compound used as a pesticide to control rodents, and its pharmacologically active derivatives, including brucine, used to regulate blood pressure. Curare alkaloids act as animal glycine receptor antagonists. Catalyzes the conversion of strychnine to 10-OH strychnine. This Strychnos nux-vomica (Poison nut) protein is Strychnine-10-hydroxylase.